The following is an 821-amino-acid chain: Leucine--tRNA ligase (821 aa).

The 'HIGH' region signature appears at 42–52 (PYPSGKLHMGH). The short motif at 583 to 587 (KMSKS) is the 'KMSKS' region element. An ATP-binding site is contributed by Lys-586.

This sequence belongs to the class-I aminoacyl-tRNA synthetase family.

It is found in the cytoplasm. It carries out the reaction tRNA(Leu) + L-leucine + ATP = L-leucyl-tRNA(Leu) + AMP + diphosphate. This Carboxydothermus hydrogenoformans (strain ATCC BAA-161 / DSM 6008 / Z-2901) protein is Leucine--tRNA ligase.